The sequence spans 169 residues: S-ribosylhomocysteine lyase (169 aa).

Residues His-54, His-58, and Cys-128 each coordinate Fe cation.

Belongs to the LuxS family. As to quaternary structure, homodimer. It depends on Fe cation as a cofactor.

The catalysed reaction is S-(5-deoxy-D-ribos-5-yl)-L-homocysteine = (S)-4,5-dihydroxypentane-2,3-dione + L-homocysteine. Its function is as follows. Involved in the synthesis of autoinducer 2 (AI-2) which is secreted by bacteria and is used to communicate both the cell density and the metabolic potential of the environment. The regulation of gene expression in response to changes in cell density is called quorum sensing. Catalyzes the transformation of S-ribosylhomocysteine (RHC) to homocysteine (HC) and 4,5-dihydroxy-2,3-pentadione (DPD). This chain is S-ribosylhomocysteine lyase, found in Psychromonas ingrahamii (strain DSM 17664 / CCUG 51855 / 37).